Consider the following 233-residue polypeptide: 5'-methylthioadenosine/S-adenosylhomocysteine nucleosidase (233 aa).

Residue Glu-12 is the Proton acceptor of the active site. Substrate-binding positions include Gly-78, Ile-156, and Met-177–Glu-178. Asp-201 acts as the Proton donor in catalysis.

The protein belongs to the PNP/UDP phosphorylase family. MtnN subfamily.

It carries out the reaction S-adenosyl-L-homocysteine + H2O = S-(5-deoxy-D-ribos-5-yl)-L-homocysteine + adenine. The enzyme catalyses S-methyl-5'-thioadenosine + H2O = 5-(methylsulfanyl)-D-ribose + adenine. It catalyses the reaction 5'-deoxyadenosine + H2O = 5-deoxy-D-ribose + adenine. It participates in amino-acid biosynthesis; L-methionine biosynthesis via salvage pathway; S-methyl-5-thio-alpha-D-ribose 1-phosphate from S-methyl-5'-thioadenosine (hydrolase route): step 1/2. Catalyzes the irreversible cleavage of the glycosidic bond in both 5'-methylthioadenosine (MTA) and S-adenosylhomocysteine (SAH/AdoHcy) to adenine and the corresponding thioribose, 5'-methylthioribose and S-ribosylhomocysteine, respectively. Also cleaves 5'-deoxyadenosine, a toxic by-product of radical S-adenosylmethionine (SAM) enzymes, into 5-deoxyribose and adenine. The protein is 5'-methylthioadenosine/S-adenosylhomocysteine nucleosidase of Listeria monocytogenes serotype 4b (strain CLIP80459).